The sequence spans 134 residues: MLRTMLKSKIHRATVTQADLHYVGSVTVDADLMDAADLLEGEQVTIVDVDNGARLVTYVITGERGSGVIGINGAAAHLIHPGDLVILIAYGMLDDAAARTYEPRVVFVDADNRVLDLGADPAFVPDTAELLSPR.

The active-site Schiff-base intermediate with substrate; via pyruvic acid is the serine 25. Serine 25 is subject to Pyruvic acid (Ser). Position 57 (threonine 57) interacts with substrate. Tyrosine 58 (proton donor) is an active-site residue. 73-75 (GAA) serves as a coordination point for substrate.

Belongs to the PanD family. In terms of assembly, heterooctamer of four alpha and four beta subunits. Requires pyruvate as cofactor. Is synthesized initially as an inactive proenzyme, which is activated by self-cleavage at a specific serine bond to produce a beta-subunit with a hydroxyl group at its C-terminus and an alpha-subunit with a pyruvoyl group at its N-terminus.

It is found in the cytoplasm. It carries out the reaction L-aspartate + H(+) = beta-alanine + CO2. It participates in cofactor biosynthesis; (R)-pantothenate biosynthesis; beta-alanine from L-aspartate: step 1/1. Catalyzes the pyruvoyl-dependent decarboxylation of aspartate to produce beta-alanine. The protein is Aspartate 1-decarboxylase of Mycolicibacterium gilvum (strain PYR-GCK) (Mycobacterium gilvum (strain PYR-GCK)).